The primary structure comprises 183 residues: Pentapeptide repeat protein MfpA (183 aa).

The Pentapeptide repeat domain maps to 113–147; it reads SLVDTDLRKCVLRGADLSGARTTGARLDDADLRGA.

This sequence belongs to the pentapeptide repeat protein family. Homodimer. Probably interacts with DNA gyrase.

Functionally, might be involved in fluoroquinolone resistance. Inhibits ATP-independent DNA relaxation, ATP-dependent DNA supercoiling and ATP-dependent decatenation by endogenous gyrase, 50% inhibition occurs at 2 uM; inhibition is abolished if GyrA is mutated (Asp-87 to Gly or His). Also inhibits fluoroquinolone-promoted dsDNA cleavage. Increases fluoroquinolone (ciprofloxacin or moxifloxacin) inhibition of gyrase supercoiling activity in a concentration-dependent manner. Inhibits DNA relaxation and supercoiling by E.coli gyrase. Forms a structure that exhibits size, shape and electrostatic similarity to B-form DNA; it may bind to DNA gyrase which is postulated to protect it from fluoroquinolones. This is Pentapeptide repeat protein MfpA from Mycobacterium tuberculosis (strain ATCC 25618 / H37Rv).